A 254-amino-acid chain; its full sequence is Persulfide dioxygenase ETHE1, mitochondrial (254 aa).

The transit peptide at 1–7 (MAGSVLK) directs the protein to the mitochondrion. Phosphoserine occurs at positions 14 and 19. N6-acetyllysine; alternate is present on K32. Position 32 is an N6-succinyllysine; alternate (K32). N6-acetyllysine is present on K66. Fe cation is bound by residues H79, H135, and D154.

Belongs to the metallo-beta-lactamase superfamily. Glyoxalase II family. In terms of assembly, homodimer. Monomer. Interacts with TST. May interact with RELA. Requires Fe(2+) as cofactor.

Its subcellular location is the cytoplasm. The protein localises to the nucleus. It localises to the mitochondrion matrix. The catalysed reaction is S-sulfanylglutathione + O2 + H2O = sulfite + glutathione + 2 H(+). With respect to regulation, glutathione increases enzyme activity. Functionally, sulfur dioxygenase that plays an essential role in hydrogen sulfide catabolism in the mitochondrial matrix. Hydrogen sulfide (H(2)S) is first oxidized by SQRDL, giving rise to cysteine persulfide residues. ETHE1 consumes molecular oxygen to catalyze the oxidation of the persulfide, once it has been transferred to a thiophilic acceptor, such as glutathione (R-SSH). Plays an important role in metabolic homeostasis in mitochondria by metabolizing hydrogen sulfide and preventing the accumulation of supraphysiological H(2)S levels that have toxic effects, due to the inhibition of cytochrome c oxidase. First described as a protein that can shuttle between the nucleus and the cytoplasm and suppress p53-induced apoptosis by sequestering the transcription factor RELA/NFKB3 in the cytoplasm and preventing its accumulation in the nucleus. The polypeptide is Persulfide dioxygenase ETHE1, mitochondrial (ETHE1) (Bos taurus (Bovine)).